Reading from the N-terminus, the 126-residue chain is Large ribosomal subunit protein uL24 (126 aa).

The tract at residues 1 to 23 (MKFSRDVTSSRRKQRKAHFGAPS) is disordered.

The protein belongs to the universal ribosomal protein uL24 family. As to quaternary structure, component of the large ribosomal subunit (LSU). Mature yeast ribosomes consist of a small (40S) and a large (60S) subunit. The 40S small subunit contains 1 molecule of ribosomal RNA (18S rRNA) and at least 33 different proteins. The large 60S subunit contains 3 rRNA molecules (25S, 5.8S and 5S rRNA) and at least 46 different proteins.

It localises to the cytoplasm. Its subcellular location is the nucleus. The protein localises to the nucleolus. Functionally, component of the ribosome, a large ribonucleoprotein complex responsible for the synthesis of proteins in the cell. The small ribosomal subunit (SSU) binds messenger RNAs (mRNAs) and translates the encoded message by selecting cognate aminoacyl-transfer RNA (tRNA) molecules. The large subunit (LSU) contains the ribosomal catalytic site termed the peptidyl transferase center (PTC), which catalyzes the formation of peptide bonds, thereby polymerizing the amino acids delivered by tRNAs into a polypeptide chain. The nascent polypeptides leave the ribosome through a tunnel in the LSU and interact with protein factors that function in enzymatic processing, targeting, and the membrane insertion of nascent chains at the exit of the ribosomal tunnel. This is Large ribosomal subunit protein uL24 (rpl26) from Schizosaccharomyces pombe (strain 972 / ATCC 24843) (Fission yeast).